A 282-amino-acid polypeptide reads, in one-letter code: 1,4-dihydroxy-6-naphtoate synthase (282 aa).

Residues 57–59 and 109–110 each bind substrate; these read KVS and TA. The active-site Proton acceptor is H153.

The protein belongs to the MqnA/MqnD family. MqnD subfamily.

The enzyme catalyses cyclic dehypoxanthinylfutalosinate = 1,4-dihydroxy-6-naphthoate + dihydroxyacetone. The protein operates within quinol/quinone metabolism; menaquinone biosynthesis. Catalyzes the conversion of cyclic dehypoxanthine futalosine (cyclic DHFL) into 1,4-dihydroxy-6-naphthoate, a step in the biosynthesis of menaquinone (MK, vitamin K2). The chain is 1,4-dihydroxy-6-naphtoate synthase from Streptomyces coelicolor (strain ATCC BAA-471 / A3(2) / M145).